We begin with the raw amino-acid sequence, 126 residues long: Aspartate 1-decarboxylase (126 aa).

The Schiff-base intermediate with substrate; via pyruvic acid role is filled by serine 25. Pyruvic acid (Ser) is present on serine 25. Threonine 57 lines the substrate pocket. The active-site Proton donor is the tyrosine 58. Substrate is bound at residue 73-75 (GAA).

The protein belongs to the PanD family. In terms of assembly, heterooctamer of four alpha and four beta subunits. It depends on pyruvate as a cofactor. Is synthesized initially as an inactive proenzyme, which is activated by self-cleavage at a specific serine bond to produce a beta-subunit with a hydroxyl group at its C-terminus and an alpha-subunit with a pyruvoyl group at its N-terminus.

The protein resides in the cytoplasm. The enzyme catalyses L-aspartate + H(+) = beta-alanine + CO2. Its pathway is cofactor biosynthesis; (R)-pantothenate biosynthesis; beta-alanine from L-aspartate: step 1/1. Functionally, catalyzes the pyruvoyl-dependent decarboxylation of aspartate to produce beta-alanine. In Alcanivorax borkumensis (strain ATCC 700651 / DSM 11573 / NCIMB 13689 / SK2), this protein is Aspartate 1-decarboxylase.